Reading from the N-terminus, the 105-residue chain is Urease subunit beta (105 aa).

It belongs to the urease beta subunit family. In terms of assembly, heterotrimer of UreA (gamma), UreB (beta) and UreC (alpha) subunits. Three heterotrimers associate to form the active enzyme.

Its subcellular location is the cytoplasm. The enzyme catalyses urea + 2 H2O + H(+) = hydrogencarbonate + 2 NH4(+). Its pathway is nitrogen metabolism; urea degradation; CO(2) and NH(3) from urea (urease route): step 1/1. The protein is Urease subunit beta of Marinomonas sp. (strain MWYL1).